The sequence spans 591 residues: CTP synthase (591 aa).

Residues M1–L281 form an amidoligase domain region. S23 is a CTP binding site. S23 lines the UTP pocket. ATP is bound by residues S24–L29 and D81. The Mg(2+) site is built by D81 and E155. Residues D162–E164, K202–Q207, and K238 each bind CTP. UTP is bound by residues K202 to Q207 and K238. One can recognise a Glutamine amidotransferase type-1 domain in the interval R306–E554. G369 is a binding site for L-glutamine. C396 serves as the catalytic Nucleophile; for glutamine hydrolysis. Residues L397 to Q400, E419, and R480 each bind L-glutamine. Catalysis depends on residues H527 and E529. A disordered region spans residues A568–G591.

Belongs to the CTP synthase family. Homotetramer.

It catalyses the reaction UTP + L-glutamine + ATP + H2O = CTP + L-glutamate + ADP + phosphate + 2 H(+). The catalysed reaction is L-glutamine + H2O = L-glutamate + NH4(+). The enzyme catalyses UTP + NH4(+) + ATP = CTP + ADP + phosphate + 2 H(+). It participates in pyrimidine metabolism; CTP biosynthesis via de novo pathway; CTP from UDP: step 2/2. Its activity is regulated as follows. Allosterically activated by GTP, when glutamine is the substrate; GTP has no effect on the reaction when ammonia is the substrate. The allosteric effector GTP functions by stabilizing the protein conformation that binds the tetrahedral intermediate(s) formed during glutamine hydrolysis. Inhibited by the product CTP, via allosteric rather than competitive inhibition. In terms of biological role, catalyzes the ATP-dependent amination of UTP to CTP with either L-glutamine or ammonia as the source of nitrogen. Regulates intracellular CTP levels through interactions with the four ribonucleotide triphosphates. This Rhodococcus jostii (strain RHA1) protein is CTP synthase.